The chain runs to 462 residues: Fumarate hydratase class II (462 aa).

Substrate contacts are provided by residues 97-99, 128-131, 138-140, and Thr186; these read SGT, HPND, and STN. His187 (proton donor/acceptor) is an active-site residue. Residue Ser317 is part of the active site. Substrate is bound by residues Ser318 and 323 to 325; that span reads KVN.

This sequence belongs to the class-II fumarase/aspartase family. Fumarase subfamily. In terms of assembly, homotetramer.

The protein localises to the cytoplasm. It carries out the reaction (S)-malate = fumarate + H2O. The protein operates within carbohydrate metabolism; tricarboxylic acid cycle; (S)-malate from fumarate: step 1/1. In terms of biological role, involved in the TCA cycle. Catalyzes the stereospecific interconversion of fumarate to L-malate. This Neisseria meningitidis serogroup A / serotype 4A (strain DSM 15465 / Z2491) protein is Fumarate hydratase class II.